Reading from the N-terminus, the 85-residue chain is ATP synthase epsilon chain (85 aa).

Belongs to the ATPase epsilon chain family. In terms of assembly, F-type ATPases have 2 components, CF(1) - the catalytic core - and CF(0) - the membrane proton channel. CF(1) has five subunits: alpha(3), beta(3), gamma(1), delta(1), epsilon(1). CF(0) has three main subunits: a, b and c.

The protein localises to the cell membrane. Functionally, produces ATP from ADP in the presence of a proton gradient across the membrane. The sequence is that of ATP synthase epsilon chain from Frankia casuarinae (strain DSM 45818 / CECT 9043 / HFP020203 / CcI3).